Here is a 311-residue protein sequence, read N- to C-terminus: Protein lifeguard 3 (311 aa).

Disordered regions lie at residues Met-1–Pro-37 and Pro-50–Gly-72. Residues Tyr-53–Pro-62 are compositionally biased toward pro residues. Phosphoserine is present on residues Ser-81 and Ser-83. 7 helical membrane passes run Leu-110–Val-130, Val-134–Cys-154, Ile-165–Met-185, Ala-190–Phe-210, Gly-221–Leu-241, Val-246–Ala-266, and Ile-286–Leu-306.

It belongs to the BI1 family. LFG subfamily.

Its subcellular location is the membrane. The protein localises to the lysosome membrane. The protein resides in the endosome membrane. Its function is as follows. Negatively regulates aortic matrix metalloproteinase-9 (MMP9) production and may play a protective role in vascular remodeling. This chain is Protein lifeguard 3 (TMBIM1), found in Homo sapiens (Human).